The primary structure comprises 156 residues: Probable succinate transporter subunit YjjB (156 aa).

The next 4 helical transmembrane spans lie at 7 to 27 (WALL…AMVF), 54 to 74 (FGMD…MIGI), 86 to 106 (VFTV…TAMI), and 128 to 148 (FLKA…PGLW).

It belongs to the ThrE exporter (TC 2.A.79) family. The transporter is composed of YjjB and YjjP.

The protein localises to the cell inner membrane. In terms of biological role, involved in succinate export with YjjP. Both proteins are required for export. The protein is Probable succinate transporter subunit YjjB of Yersinia enterocolitica serotype O:8 / biotype 1B (strain NCTC 13174 / 8081).